A 266-amino-acid chain; its full sequence is Imidazole glycerol phosphate synthase subunit HisF (266 aa).

Residues Asp-11 and Asp-130 contribute to the active site. Positions 134-157 are disordered; sequence RTPEEAARPGPDGAPRGEGWDVYS.

It belongs to the HisA/HisF family. Heterodimer of HisH and HisF.

It is found in the cytoplasm. The catalysed reaction is 5-[(5-phospho-1-deoxy-D-ribulos-1-ylimino)methylamino]-1-(5-phospho-beta-D-ribosyl)imidazole-4-carboxamide + L-glutamine = D-erythro-1-(imidazol-4-yl)glycerol 3-phosphate + 5-amino-1-(5-phospho-beta-D-ribosyl)imidazole-4-carboxamide + L-glutamate + H(+). It functions in the pathway amino-acid biosynthesis; L-histidine biosynthesis; L-histidine from 5-phospho-alpha-D-ribose 1-diphosphate: step 5/9. In terms of biological role, IGPS catalyzes the conversion of PRFAR and glutamine to IGP, AICAR and glutamate. The HisF subunit catalyzes the cyclization activity that produces IGP and AICAR from PRFAR using the ammonia provided by the HisH subunit. The sequence is that of Imidazole glycerol phosphate synthase subunit HisF from Paracidovorax citrulli (strain AAC00-1) (Acidovorax citrulli).